The following is a 152-amino-acid chain: Nucleoside diphosphate kinase B (152 aa).

The segment at 1–66 is interaction with AKAP13; the sequence is MAHAERTFIA…DRPFFPGLVK (66 aa). ATP contacts are provided by K12, F60, R88, T94, R105, and N115. H118 functions as the Pros-phosphohistidine intermediate in the catalytic mechanism.

The protein belongs to the NDK family. Hexamer of two different chains: An and B (A6, A5B, A4B2, A3B3, A2B4, AB5, B6). Interacts with CAPN8. Interacts with AKAP13. Interacts with ITGB1BP1 (via C-terminal domain region). Interacts with BCL2L10. Mg(2+) serves as cofactor.

It is found in the cytoplasm. The protein localises to the cell projection. Its subcellular location is the lamellipodium. The protein resides in the ruffle. It localises to the nucleus. It catalyses the reaction a 2'-deoxyribonucleoside 5'-diphosphate + ATP = a 2'-deoxyribonucleoside 5'-triphosphate + ADP. It carries out the reaction a ribonucleoside 5'-diphosphate + ATP = a ribonucleoside 5'-triphosphate + ADP. The enzyme catalyses ATP + protein L-histidine = ADP + protein N-phospho-L-histidine.. Major role in the synthesis of nucleoside triphosphates other than ATP. The ATP gamma phosphate is transferred to the NDP beta phosphate via a ping-pong mechanism, using a phosphorylated active-site intermediate. Negatively regulates Rho activity by interacting with AKAP13/LBC. Acts as a transcriptional activator of the MYC gene; binds DNA non-specifically. Binds to both single-stranded guanine- and cytosine-rich strands within the nuclease hypersensitive element (NHE) III(1) region of the MYC gene promoter. Does not bind to duplex NHE III(1). Has G-quadruplex (G4) DNA-binding activity, which is independent of its nucleotide-binding and kinase activity. Binds both folded and unfolded G4 with similar low nanomolar affinities. Stabilizes folded G4s regardless of whether they are prefolded or not. Exhibits histidine protein kinase activity. The sequence is that of Nucleoside diphosphate kinase B (NME2) from Bos taurus (Bovine).